A 335-amino-acid chain; its full sequence is Large ribosomal subunit protein uL10 (335 aa).

The disordered stretch occupies residues 304 to 335 (GAAAPVEEAPVEEKKEEKKEEAAAPAGLGMLF). Positions 314-325 (VEEKKEEKKEEA) are enriched in basic and acidic residues.

This sequence belongs to the universal ribosomal protein uL10 family. Part of the 50S ribosomal subunit. Homodimer, it forms part of the ribosomal stalk which helps the ribosome interact with GTP-bound translation factors. Forms both a pentameric L10(L12)2(L12)2 and heptameric L10(L12)2(L12)2(L12)2 complex, where L10 forms an elongated spine to which the L12 dimers bind in a sequential fashion. The proportion of heptameric complexes increases during cell growth.

Forms part of the ribosomal stalk, playing a central role in the interaction of the ribosome with GTP-bound translation factors. The polypeptide is Large ribosomal subunit protein uL10 (Methanococcus maripaludis (strain DSM 14266 / JCM 13030 / NBRC 101832 / S2 / LL)).